The primary structure comprises 98 residues: UPF0235 protein MJ0618 (98 aa).

This sequence belongs to the UPF0235 family.

This Methanocaldococcus jannaschii (strain ATCC 43067 / DSM 2661 / JAL-1 / JCM 10045 / NBRC 100440) (Methanococcus jannaschii) protein is UPF0235 protein MJ0618.